The chain runs to 815 residues: Leucine--tRNA ligase (815 aa).

A 'HIGH' region motif is present at residues proline 41–histidine 51. Residues lysine 576 to serine 580 carry the 'KMSKS' region motif. Lysine 579 is a binding site for ATP.

Belongs to the class-I aminoacyl-tRNA synthetase family.

The protein localises to the cytoplasm. The enzyme catalyses tRNA(Leu) + L-leucine + ATP = L-leucyl-tRNA(Leu) + AMP + diphosphate. The chain is Leucine--tRNA ligase from Pseudothermotoga lettingae (strain ATCC BAA-301 / DSM 14385 / NBRC 107922 / TMO) (Thermotoga lettingae).